The primary structure comprises 518 residues: Putative malate dehydrogenase 1B (518 aa).

Belongs to the LDH/MDH superfamily. MDH type 2 family.

In Homo sapiens (Human), this protein is Putative malate dehydrogenase 1B (MDH1B).